A 141-amino-acid polypeptide reads, in one-letter code: MFKEFREFALKGNVVDLAIGVIIGAAFGRIIDSLVNDIIMPFFGALGGLDFSNYFFPLTKGVTASSLAEARRQGAVLAWGNFLTVAVNFLIIAFVLFLIVRSINTFRKRVLKENLEVTPPAKPQDVVVLEEIRDLIAARRA.

Helical transmembrane passes span 8-28 (FALKGNVVDLAIGVIIGAAFG), 38-58 (IIMPFFGALGGLDFSNYFFPL), and 80-100 (GNFLTVAVNFLIIAFVLFLIV).

The protein belongs to the MscL family. In terms of assembly, homopentamer.

The protein resides in the cell inner membrane. Channel that opens in response to stretch forces in the membrane lipid bilayer. May participate in the regulation of osmotic pressure changes within the cell. This Beijerinckia indica subsp. indica (strain ATCC 9039 / DSM 1715 / NCIMB 8712) protein is Large-conductance mechanosensitive channel.